The sequence spans 114 residues: Large ribosomal subunit protein uL22 (114 aa).

This sequence belongs to the universal ribosomal protein uL22 family. Part of the 50S ribosomal subunit.

Its function is as follows. This protein binds specifically to 23S rRNA; its binding is stimulated by other ribosomal proteins, e.g. L4, L17, and L20. It is important during the early stages of 50S assembly. It makes multiple contacts with different domains of the 23S rRNA in the assembled 50S subunit and ribosome. The globular domain of the protein is located near the polypeptide exit tunnel on the outside of the subunit, while an extended beta-hairpin is found that lines the wall of the exit tunnel in the center of the 70S ribosome. This is Large ribosomal subunit protein uL22 from Aeromonas hydrophila subsp. hydrophila (strain ATCC 7966 / DSM 30187 / BCRC 13018 / CCUG 14551 / JCM 1027 / KCTC 2358 / NCIMB 9240 / NCTC 8049).